Reading from the N-terminus, the 781-residue chain is Catenin beta-1 (781 aa).

Ala2 bears the N-acetylalanine mark. The interval 2 to 23 (ATQADLMELDMAMEPDRKAAVS) is interaction with VCL. Ser23 is subject to Phosphoserine; by GSK3-beta; alternate. O-linked (GlcNAc) serine; alternate glycosylation occurs at Ser23. Position 29 is a phosphoserine; by GSK3-beta (Ser29). Phosphoserine; by GSK3-beta and HIPK2 occurs at positions 33 and 37. Positions 34-56 (GIHSGATTTAPSLSGKGNPEEED) are disordered. Thr41 carries the post-translational modification Phosphothreonine; by GSK3-beta. The residue at position 45 (Ser45) is a Phosphoserine. Lys49 carries the N6-acetyllysine modification. A Phosphotyrosine; by PTK6 modification is found at Tyr64. Position 142 is a phosphotyrosine; by FYN and PTK6 (Tyr142). 12 ARM repeats span residues 151 to 191 (RAIP…IMRS), 193 to 234 (QMVS…IFKS), 235 to 276 (GGIP…VRLA), 277 to 318 (GGLQ…ILAS), 319 to 360 (GGPQ…IVEA), 361 to 389 (GGMQALGLHLTDPSQRLVQNCLWTLRNLS), 400 to 441 (GLLG…VCQV), 442 to 484 (GGIE…AQNA), 489 to 530 (YGLP…LREQ), 531 to 571 (GAIP…EIVE), 594 to 636 (NTIP…AEGA), and 637 to 666 (TAPLTELLHSRNEGVATYAAAVLFRMSEDK). Residues 156-178 (LTKLLNDEDQVVVNKAAVMVHQL) are interaction with BCL9. Residue Ser191 is modified to Phosphoserine; by CDK5. Ser246 carries the post-translational modification Phosphoserine; by CDK5. Residues Tyr331 and Tyr333 each carry the phosphotyrosine modification. Position 552 is a phosphoserine; by AMPK (Ser552). Position 556 is a phosphothreonine (Thr556). An S-nitrosocysteine modification is found at Cys619. At Ser675 the chain carries Phosphoserine. Residues 705 to 781 (EPLGYRQDDP…NQLAWFDTDL (77 aa)) form a disordered region. Positions 734–745 (MMEHEMGGHHPG) are enriched in basic and acidic residues. Residues 772-781 (NQLAWFDTDL) form an interaction with SCRIB region.

Belongs to the beta-catenin family. As to quaternary structure, two separate complex-associated pools are found in the cytoplasm. The majority is present as component of an E-cadherin/ catenin adhesion complex composed of at least E-cadherin/CDH1 and beta-catenin/CTNNB1, and possibly alpha-catenin/CTNNA1; the complex is located to adherens junctions. The stable association of CTNNA1 is controversial as CTNNA1 was shown not to bind to F-actin when assembled in the complex. Alternatively, the CTNNA1-containing complex may be linked to F-actin by other proteins such as LIMA1. Another cytoplasmic pool is part of a large complex containing AXIN1, AXIN2, APC, CSNK1A1 and GSK3B that promotes phosphorylation on N-terminal Ser and Thr residues and ubiquitination of CTNNB1 via BTRC and its subsequent degradation by the proteasome. Wnt-dependent activation of DVL antagonizes the action of GSK3B. When GSK3B activity is inhibited the complex dissociates, CTNNB1 is dephosphorylated and is no longer targeted for destruction. The stabilized protein translocates to the nucleus, where it binds TCF/LEF-1 family members, BCL9, BCL9L and possibly also RUVBL1 and CHD8. Binds CTNNBIP and EP300. CTNNB1 forms a ternary complex with LEF1 and EP300 that is disrupted by CTNNBIP1 binding. Interacts with TAX1BP3 (via the PDZ domain); this interaction inhibits the transcriptional activity of CTNNB1. Interacts with AJAP1, BAIAP1, CARM1, CTNNA3, CXADR and PCDH11Y. Binds NHERF1. Interacts with GLIS2 and SLC30A9. Interacts with XIRP1 and MUC1. Interacts with PTPRU (via the cytoplasmic juxtamembrane domain) and with EMD. Interacts with SCRIB. Interacts with TNIK. Interacts with SESTD1 and TRPC4. Interacts directly with AXIN1; the interaction is regulated by CDK2 phosphorylation of AXIN1. Interacts with CAV1. Interacts with TRPV4. The TRPV4 and CTNNB1 complex can interact with CDH1. Interacts with VCL. Interacts with PTPRJ. Interacts with PKT7. Interacts with FAT1 (via the cytoplasmic domain). Interacts with NANOS1 and NDRG2. Interacts with NEK2, CDK2 and CDK5. Interacts with PTK6. Interacts with SOX7; this interaction may lead to proteasomal degradation of active CTNNB1 and thus inhibition of Wnt/beta-catenin-stimulated transcription. Identified in a complex with HINT1 and MITF. Interacts with FHIT. The CTNNB1 and TCF4 complex interacts with PML. Interacts with FERMT2. Identified in a complex with TCF4 and FERMT2. Interacts with RORA. May interact with P-cadherin/CDH3. Interacts with RAPGEF2. Interacts with RNF220. Interacts with CTNND2. Interacts (via the C-terminal region) with CBY1. The complex composed, at least, of APC, CTNNB1 and GSK3B interacts with JPT1; the interaction requires the inactive form of GSK3B (phosphorylated at 'Ser-9'). Interacts with DLG5. Interacts with FAM53B; promoting translocation to the nucleus. Interacts with TMEM170B. Interacts with AHI1. Interacts with GID8. Component of an cadherin:catenin adhesion complex composed of at least of CDH26, beta-catenin/CTNNB1, alpha-catenin/CTNNA1 and p120 catenin/CTNND1. Forms a complex comprising APPL1, RUVBL2, APPL2, HDAC1 and HDAC2. Interacts with IRF2BPL; mediates the ubiquitination and degradation of CTNNB1. Interacts with LMBR1L and AMFR. Interacts with LMBR1L. Interacts with SOX30; prevents interaction of CTNNB1 with TCF7L2/TCF4 and leads to inhibition of Wnt signaling. Interacts with SOX9; inhibiting CTNNB1 activity by competing with the binding sites of TCF/LEF within CTNNB1, thereby inhibiting the Wnt signaling. Interacts with SPN/CD43 cytoplasmic tail. Interacts (when phosphorylated at Tyr-333) with isoform M2 of PKM (PKM2); promoting transcription activation. Interacts with PKP2 (via HEAD domain). Interacts with CDH1. Interacts (when unphosphorylated) with FLYWCH1, perhaps preventing interaction of CTNNB1 with TCF4, and thereby regulating transcription activation; phosphorylation of CTNNB1 may inhibit the interaction. Interacts (via the central armadillo domains) with probable transcriptional regulator ADNP (via N-terminal region); interaction is direct and stabilizes CTNNB1 by modulating its phosphorylation by glycogen synthase kinase-3 beta GSK3B. Interacts with NR5A2. Interacts with DSG2; the interaction promotes localization of CTNNB1 at cell junctions thus reducing its nuclear localization and subsequent transcription of CTNNB1/TCF-target genes. Post-translationally, phosphorylation by GSK3B requires prior phosphorylation of Ser-45 by another kinase. Phosphorylation proceeds then from Thr-41 to Ser-33. Phosphorylated by NEK2. EGF stimulates tyrosine phosphorylation. Phosphorylated on Ser-33 and Ser-37 by HIPK2. This phosphorylation triggers proteasomal degradation. Phosphorylation at Ser-552 by AMPK promotes stabilization of the protein, enhancing TCF/LEF-mediated transcription. Phosphorylation on Ser-191 and Ser-246 by CDK5. Phosphorylation by CDK2 regulates insulin internalization. Phosphorylation by PTK6 at Tyr-64, Tyr-142, Tyr-331 and/or Tyr-333 with the predominant site at Tyr-64 is not essential for inhibition of transcriptional activity. Phosphorylation by SRC at Tyr-333 promotes interaction with isoform M2 of PKM (PKM2); promoting transcription activation. Ubiquitinated by the SCF(BTRC) E3 ligase complex when phosphorylated by GSK3B, leading to its degradation. Ubiquitinated by a E3 ubiquitin ligase complex containing UBE2D1, SIAH1, CACYBP/SIP, SKP1, APC and TBL1X, leading to its subsequent proteasomal degradation. Ubiquitinated and degraded following interaction with SOX9. Ubiquitinated via 'Lys-11'- and 'Lys-29'-linked ubiquitin chains by UBR5, leading to its stabilization. In terms of processing, S-nitrosylation at Cys-619 within adherens junctions promotes VEGF-induced, NO-dependent endothelial cell permeability by disrupting interaction with E-cadherin, thus mediating disassembly adherens junctions. Post-translationally, O-glycosylation at Ser-23 decreases nuclear localization and transcriptional activity, and increases localization to the plasma membrane and interaction with E-cadherin CDH1. Deacetylated at Lys-49 by SIRT1.

It is found in the cytoplasm. The protein resides in the nucleus. The protein localises to the cytoskeleton. Its subcellular location is the cell junction. It localises to the adherens junction. It is found in the cell membrane. The protein resides in the microtubule organizing center. The protein localises to the centrosome. Its subcellular location is the spindle pole. It localises to the synapse. It is found in the cilium basal body. Functionally, key downstream component of the canonical Wnt signaling pathway. In the absence of Wnt, forms a complex with AXIN1, AXIN2, APC, CSNK1A1 and GSK3B that promotes phosphorylation on N-terminal Ser and Thr residues and ubiquitination of CTNNB1 via BTRC and its subsequent degradation by the proteasome. In the presence of Wnt ligand, CTNNB1 is not ubiquitinated and accumulates in the nucleus, where it acts as a coactivator for transcription factors of the TCF/LEF family, leading to activate Wnt responsive genes. Also acts as a coactivator for other transcription factors, such as NR5A2. Promotes epithelial to mesenchymal transition/mesenchymal to epithelial transition (EMT/MET) via driving transcription of CTNNB1/TCF-target genes. Involved in the regulation of cell adhesion, as component of an E-cadherin:catenin adhesion complex. Acts as a negative regulator of centrosome cohesion. Involved in the CDK2/PTPN6/CTNNB1/CEACAM1 pathway of insulin internalization. Blocks anoikis of malignant kidney and intestinal epithelial cells and promotes their anchorage-independent growth by down-regulating DAPK2. Disrupts PML function and PML-NB formation by inhibiting RANBP2-mediated sumoylation of PML. Promotes neurogenesis by maintaining sympathetic neuroblasts within the cell cycle. Involved in chondrocyte differentiation via interaction with SOX9: SOX9-binding competes with the binding sites of TCF/LEF within CTNNB1, thereby inhibiting the Wnt signaling. Acts as a positive regulator of odontoblast differentiation during mesenchymal tooth germ formation, via promoting the transcription of differentiation factors such as LEF1, BMP2 and BMP4. Activity is repressed in a MSX1-mediated manner at the bell stage of mesenchymal tooth germ formation which prevents premature differentiation of odontoblasts. This Bos taurus (Bovine) protein is Catenin beta-1.